The primary structure comprises 87 residues: Apoptosis inducing factor BLCAP B (87 aa).

The next 2 helical transmembrane spans lie at 19–39 (PALWFSHSVFMGFYLLSFLLE) and 43–63 (CTICALVFLGALFLICYSCWG).

The protein belongs to the BLCAP family.

It localises to the cytoplasm. Its subcellular location is the nucleus. It is found in the membrane. Its function is as follows. Acts as a tumor suppressor; induces growth arrest at G(1)/S checkpoint and apoptosis via RB1-dependent and p53/TP53- and NF-kappa-B-independent mechanisms. Modulates expression of genes involved in the regulation of proliferation, cell cycle and apoptosis. This Xenopus laevis (African clawed frog) protein is Apoptosis inducing factor BLCAP B (blcap-b).